The primary structure comprises 299 residues: Deoxyhypusine hydroxylase (299 aa).

5 HEAT-like PBS-type repeats span residues 54 to 80 (LKHE…VLQD), 87 to 113 (VRHE…YSED), 174 to 200 (DRYR…GLRA), 205 to 231 (FRHE…ALRS), and 238 to 264 (VRHE…FAQD). Fe cation-binding residues include H56, H89, and E90. Residues H207, H240, and E241 each coordinate Fe cation.

Belongs to the deoxyhypusine hydroxylase family. The cofactor is Fe(2+).

The enzyme catalyses [eIF5A protein]-deoxyhypusine + AH2 + O2 = [eIF5A protein]-hypusine + A + H2O. It participates in protein modification; eIF5A hypusination. In terms of biological role, catalyzes the hydroxylation of the N(6)-(4-aminobutyl)-L-lysine intermediate produced by deoxyhypusine synthase/DHPS on a critical lysine of the eukaryotic translation initiation factor 5A/eIF-5A. This is the second step of the post-translational modification of that lysine into an unusual amino acid residue named hypusine. Hypusination is unique to mature eIF-5A factor and is essential for its function. The protein is Deoxyhypusine hydroxylase of Gallus gallus (Chicken).